The chain runs to 239 residues: Proteasome subunit beta type-6 (239 aa).

Ala-2 carries the N-acetylalanine modification. Positions 2–34 are cleaved as a propeptide — removed in mature form; the sequence is AATLLAARGAGPAPAWGPEAFTPDWESREVSTG. Thr-35 (nucleophile) is an active-site residue. Phosphothreonine is present on Thr-69.

It belongs to the peptidase T1B family. The 26S proteasome consists of a 20S proteasome core and two 19S regulatory subunits. The 20S proteasome core is a barrel-shaped complex made of 28 subunits that are arranged in four stacked rings. The two outer rings are each formed by seven alpha subunits, and the two inner rings are formed by seven beta subunits. The proteolytic activity is exerted by three beta-subunits PSMB5, PSMB6 and PSMB7. As to quaternary structure, (Microbial infection) Interacts with HIV-1 protein Tat.

It is found in the cytoplasm. The protein resides in the nucleus. It carries out the reaction Cleavage of peptide bonds with very broad specificity.. In terms of biological role, component of the 20S core proteasome complex involved in the proteolytic degradation of most intracellular proteins. This complex plays numerous essential roles within the cell by associating with different regulatory particles. Associated with two 19S regulatory particles, forms the 26S proteasome and thus participates in the ATP-dependent degradation of ubiquitinated proteins. The 26S proteasome plays a key role in the maintenance of protein homeostasis by removing misfolded or damaged proteins that could impair cellular functions, and by removing proteins whose functions are no longer required. Associated with the PA200 or PA28, the 20S proteasome mediates ubiquitin-independent protein degradation. This type of proteolysis is required in several pathways including spermatogenesis (20S-PA200 complex) or generation of a subset of MHC class I-presented antigenic peptides (20S-PA28 complex). Within the 20S core complex, PSMB6 displays a peptidylglutamyl-hydrolizing activity also termed postacidic or caspase-like activity, meaning that the peptides bond hydrolysis occurs directly after acidic residues. The sequence is that of Proteasome subunit beta type-6 from Homo sapiens (Human).